The primary structure comprises 317 residues: L-lactate dehydrogenase (317 aa).

Residues V17, D38, K43, Y69, and G83–A84 each bind NAD(+). Positions 86 and 92 each coordinate substrate. NAD(+) contacts are provided by residues S105, A122–N124, and S147. Substrate is bound at residue N124 to D127. D152–R155 contributes to the substrate binding site. The beta-D-fructose 1,6-bisphosphate site is built by R157 and H172. H179 acts as the Proton acceptor in catalysis. Phosphotyrosine is present on Y224. T233 lines the substrate pocket.

This sequence belongs to the LDH/MDH superfamily. LDH family. Homotetramer.

The protein resides in the cytoplasm. It catalyses the reaction (S)-lactate + NAD(+) = pyruvate + NADH + H(+). It participates in fermentation; pyruvate fermentation to lactate; (S)-lactate from pyruvate: step 1/1. Its activity is regulated as follows. Allosterically activated by fructose 1,6-bisphosphate (FBP). Catalyzes the conversion of lactate to pyruvate. This is L-lactate dehydrogenase from Bacillus caldotenax.